A 136-amino-acid chain; its full sequence is MATFTTEQAGYQMQAILQVIGYDLLIVVTGGTNPHIGDVTTLTASTVPETVKFPSHDGRFHKDNFISERMAKRIQRYLAGSCTITAGIHVNQITKAQIAAAAPMTDDLSRQIISWLQAHPVQAEKPEYYGQDEQPR.

This sequence belongs to the CinA family.

Functionally, probably involved in tannin degradation, however the precise biochemical function in metabolism of gallate is unknown. The chain is Protein LpdD from Lactiplantibacillus plantarum (strain ATCC BAA-793 / NCIMB 8826 / WCFS1) (Lactobacillus plantarum).